The sequence spans 345 residues: Phosphoribosylformylglycinamidine cyclo-ligase (345 aa).

It belongs to the AIR synthase family.

It localises to the cytoplasm. The enzyme catalyses 2-formamido-N(1)-(5-O-phospho-beta-D-ribosyl)acetamidine + ATP = 5-amino-1-(5-phospho-beta-D-ribosyl)imidazole + ADP + phosphate + H(+). It functions in the pathway purine metabolism; IMP biosynthesis via de novo pathway; 5-amino-1-(5-phospho-D-ribosyl)imidazole from N(2)-formyl-N(1)-(5-phospho-D-ribosyl)glycinamide: step 2/2. This Bifidobacterium longum (strain DJO10A) protein is Phosphoribosylformylglycinamidine cyclo-ligase.